The chain runs to 313 residues: Guanine nucleotide-binding protein-like 3-like protein (313 aa).

A compositionally biased stretch (basic residues) spans 1–14; that stretch reads MGIKKKRQSKRLTT. The disordered stretch occupies residues 1–41; it reads MGIKKKRQSKRLTTRKREGMLKRARANERKKRRMDRKMQAK. Over residues 15–27 the composition is skewed to basic and acidic residues; it reads RKREGMLKRARAN. Residues 95–98, 178–185, and 212–215 each bind GTP; these read SKSD, GNPGSGKN, and TLSS.

The protein belongs to the MMR1/HSR1 GTP-binding protein family.

Its subcellular location is the nucleus. It localises to the nucleolus. Its function is as follows. Required for normal processing of ribosomal pre-rRNA. Required for cell proliferation. Binds GTP. In Encephalitozoon cuniculi (strain GB-M1) (Microsporidian parasite), this protein is Guanine nucleotide-binding protein-like 3-like protein.